A 155-amino-acid polypeptide reads, in one-letter code: Large ribosomal subunit protein eL24 (155 aa).

The disordered stretch occupies residues 87 to 155 (LELIKERRSQ…SFQKVKATSR (69 aa)). Residues 89-129 (LIKERRSQKPSDRKAARDSKLAKDKEAKKAAKAARKAEKAK) are compositionally biased toward basic and acidic residues. Positions 130–143 (AVASGASVVSKQQA) are enriched in low complexity.

This sequence belongs to the eukaryotic ribosomal protein eL24 family. In terms of assembly, component of the large ribosomal subunit. Mature ribosomes consist of a small (40S) and a large (60S) subunit. The 40S subunit contains about 32 different proteins and 1 molecule of RNA (18S). The 60S subunit contains 45 different proteins and 3 molecules of RNA (25S, 5.8S and 5S).

The protein resides in the cytoplasm. Its function is as follows. Component of the ribosome, a large ribonucleoprotein complex responsible for the synthesis of proteins in the cell. The small ribosomal subunit (SSU) binds messenger RNAs (mRNAs) and translates the encoded message by selecting cognate aminoacyl-transfer RNA (tRNA) molecules. The large subunit (LSU) contains the ribosomal catalytic site termed the peptidyl transferase center (PTC), which catalyzes the formation of peptide bonds, thereby polymerizing the amino acids delivered by tRNAs into a polypeptide chain. The nascent polypeptides leave the ribosome through a tunnel in the LSU and interact with protein factors that function in enzymatic processing, targeting, and the membrane insertion of nascent chains at the exit of the ribosomal tunnel. The protein is Large ribosomal subunit protein eL24 of Candida albicans (strain SC5314 / ATCC MYA-2876) (Yeast).